The primary structure comprises 459 residues: DNA damage-inducible protein F (459 aa).

12 helical membrane passes run 2–22, 29–49, 63–83, 111–131, 154–174, 180–200, 207–227, 265–285, 289–309, 338–358, 373–393, and 416–436; these read PPGV…MAFL, LWHL…LGLV, LGGV…LLFL, LLLA…IIDL, WLSA…LGVQ, VILL…LVMG, GAAL…LLMV, LLQL…SDII, AVLM…AYAV, IVAL…IALL, IWQV…GMFI, and LLTL…VFLA.

It belongs to the multi antimicrobial extrusion (MATE) (TC 2.A.66.1) family.

The protein localises to the cell inner membrane. This chain is DNA damage-inducible protein F (dinF), found in Escherichia coli (strain K12).